We begin with the raw amino-acid sequence, 172 residues long: MLNRVVLVGRLTKDPELRYTPNGAAVATFTLAVNRTFTNQSGEREADFINCVTWRRQAENVANFLKKGSLAGVDGRLQTRNYENQQGQRVFVTEVQAESVQFLEPKNGGGSGSGGYNEGNSGGGQYFGGGQNDNPFGGNQNNQRRNQGNSFNDDPFANDGKPIDISDDDLPF.

Residues 1–104 (MLNRVVLVGR…VQAESVQFLE (104 aa)) form the SSB domain. A Phosphotyrosine modification is found at Tyr-82. Residues 103–172 (LEPKNGGGSG…IDISDDDLPF (70 aa)) are disordered. A compositionally biased stretch (gly residues) spans 107 to 131 (NGGGSGSGGYNEGNSGGGQYFGGGQ). A compositionally biased stretch (low complexity) spans 132–149 (NDNPFGGNQNNQRRNQGN). The Important for interaction with partner proteins signature appears at 167–172 (DDDLPF).

In terms of assembly, homotetramer. Interacts with proteins involved in DNA metabolism such as PriA, RecQ, RecG, RecS, DnaE, RarA, RecJ, RecO, SbcC, RecD2 (formerly YrrC), XseA and Ung. Interacts with RecQ via its 10 C-terminal residues. Interacts with RecD2. In terms of processing, phosphorylated by YwqD, which increases ssDNA affinity; dephosphorylated by YwqE.

The protein resides in the cytoplasm. The protein localises to the nucleoid. Functionally, plays an important role in DNA replication, recombination and repair. Binds to single-stranded (ss)DNA and to an array of partner proteins to recruit them to their sites of action during DNA metabolism. Associates with oriC, this requires DnaA. SsbA binding to ssDNA prevents DnaB and DnaD individually from binding to DNA. Has a 20-fold higher affinity for ssDNA than SsbB; SsbA and DprA activate the homologous DNA strand exchange function of RecA-ATP. Enhances the activity of 3'-5' DNA helicase RecQ. This Bacillus subtilis (strain 168) protein is Single-stranded DNA-binding protein A (ssbA).